The following is a 75-amino-acid chain: Supwaprin-a (75 aa).

The N-terminal stretch at 1–24 (MSSGGLLLLLGFLTLWAELTPVSG) is a signal peptide. Residues 27-72 (RPKKPGLCPPRPQKPPCVRECKNDWSCPGEQKCCRYGCIFECRDPI) form the WAP domain. Cystine bridges form between Cys34–Cys60, Cys43–Cys64, Cys47–Cys59, and Cys53–Cys68.

The protein belongs to the venom waprin family. Expressed by the venom gland.

It is found in the secreted. Its function is as follows. Damages membranes of susceptible bacteria. Has no hemolytic activity. Not toxic to mice. Does not inhibit the proteinases elastase and cathepsin G. The polypeptide is Supwaprin-a (Austrelaps superbus (Lowland copperhead snake)).